The primary structure comprises 332 residues: uncharacterized protein (332 aa).

Residues 185–205 traverse the membrane as a helical segment; the sequence is MVYGYSVFNAFFILLALPNVI.

The protein resides in the host membrane. This is an uncharacterized protein from Sulfolobus islandicus filamentous virus (isolate Iceland/Hveragerdi) (SIFV).